We begin with the raw amino-acid sequence, 270 residues long: MTLRVAIVGAGGRMGRQLIQAVSETEGVVLGAAFERQGSSLLGADAGELANVGHLGVQITDDLASQQDQFDLLIDFTRPEGTLAHLAFCVAQHKNMVIGTTGFDDDGKAKIQQAADSIGIVFASNFSVGVNLVFKLLEKAAKVMGDYCDIEIIEAHHRHKVDAPSGTALSMGEHIAKTLGRDLKTHGVFTRDGITGERKRDEIGFATIRASDVVGEHSVWFADIGERVEIAHKATSRMTFAKGAVRAAKWLAQKEKGLFDMTDVLDLNQL.

Residues 9–14 and glutamate 35 contribute to the NAD(+) site; that span reads GAGGRM. Arginine 36 contacts NADP(+). NAD(+) contacts are provided by residues 99 to 101 and 123 to 126; these read GTT and ASNF. Histidine 156 (proton donor/acceptor) is an active-site residue. Residue histidine 157 participates in (S)-2,3,4,5-tetrahydrodipicolinate binding. Residue lysine 160 is the Proton donor of the active site. 166–167 is a binding site for (S)-2,3,4,5-tetrahydrodipicolinate; the sequence is GT.

Belongs to the DapB family.

The protein resides in the cytoplasm. It carries out the reaction (S)-2,3,4,5-tetrahydrodipicolinate + NAD(+) + H2O = (2S,4S)-4-hydroxy-2,3,4,5-tetrahydrodipicolinate + NADH + H(+). It catalyses the reaction (S)-2,3,4,5-tetrahydrodipicolinate + NADP(+) + H2O = (2S,4S)-4-hydroxy-2,3,4,5-tetrahydrodipicolinate + NADPH + H(+). It participates in amino-acid biosynthesis; L-lysine biosynthesis via DAP pathway; (S)-tetrahydrodipicolinate from L-aspartate: step 4/4. Its function is as follows. Catalyzes the conversion of 4-hydroxy-tetrahydrodipicolinate (HTPA) to tetrahydrodipicolinate. The protein is 4-hydroxy-tetrahydrodipicolinate reductase of Pasteurella multocida (strain Pm70).